Consider the following 72-residue polypeptide: uncharacterized protein (72 aa).

The tract at residues 52-72 (KGGRQRDEAVGVEELCKQHKE) is disordered. Basic and acidic residues predominate over residues 55-72 (RQRDEAVGVEELCKQHKE).

Belongs to the YiiE family.

This is an uncharacterized protein from Escherichia coli O6:H1 (strain CFT073 / ATCC 700928 / UPEC).